Reading from the N-terminus, the 716-residue chain is Fatty acid oxidation complex subunit alpha (716 aa).

Residues 1–188 form an enoyl-CoA hydratase/isomerase region; it reads MIYQSPTIQV…KVGAIDAVVA (188 aa). Asp295 is a substrate binding site. The tract at residues 310-716 is 3-hydroxyacyl-CoA dehydrogenase; sequence KDIKHAAVLG…SNNGSYYPKA (407 aa). NAD(+) is bound by residues Met323, Asp342, 399 to 401, Lys406, and Ser428; that span reads VVE. His449 (for 3-hydroxyacyl-CoA dehydrogenase activity) is an active-site residue. Asn452 serves as a coordination point for NAD(+). 2 residues coordinate substrate: Asn499 and Tyr659.

The protein in the N-terminal section; belongs to the enoyl-CoA hydratase/isomerase family. This sequence in the C-terminal section; belongs to the 3-hydroxyacyl-CoA dehydrogenase family. As to quaternary structure, heterotetramer of two alpha chains (FadB) and two beta chains (FadA).

The enzyme catalyses a (3S)-3-hydroxyacyl-CoA + NAD(+) = a 3-oxoacyl-CoA + NADH + H(+). It carries out the reaction a (3S)-3-hydroxyacyl-CoA = a (2E)-enoyl-CoA + H2O. It catalyses the reaction a 4-saturated-(3S)-3-hydroxyacyl-CoA = a (3E)-enoyl-CoA + H2O. The catalysed reaction is (3S)-3-hydroxybutanoyl-CoA = (3R)-3-hydroxybutanoyl-CoA. The enzyme catalyses a (3Z)-enoyl-CoA = a 4-saturated (2E)-enoyl-CoA. It carries out the reaction a (3E)-enoyl-CoA = a 4-saturated (2E)-enoyl-CoA. Its pathway is lipid metabolism; fatty acid beta-oxidation. Its function is as follows. Involved in the aerobic and anaerobic degradation of long-chain fatty acids via beta-oxidation cycle. Catalyzes the formation of 3-oxoacyl-CoA from enoyl-CoA via L-3-hydroxyacyl-CoA. It can also use D-3-hydroxyacyl-CoA and cis-3-enoyl-CoA as substrate. The protein is Fatty acid oxidation complex subunit alpha of Shewanella amazonensis (strain ATCC BAA-1098 / SB2B).